Consider the following 198-residue polypeptide: Glycerol-3-phosphate acyltransferase (198 aa).

The next 6 helical transmembrane spans lie at 1–21 (MNLL…GYLA), 55–75 (VFLL…YLLL), 79–99 (WQVA…WLNW), 111–131 (IFLG…IIMI), 136–156 (IVSL…FLSF), and 158–178 (GSNL…LVIW).

The protein belongs to the PlsY family. Probably interacts with PlsX.

It is found in the cell inner membrane. It catalyses the reaction an acyl phosphate + sn-glycerol 3-phosphate = a 1-acyl-sn-glycero-3-phosphate + phosphate. It functions in the pathway lipid metabolism; phospholipid metabolism. In terms of biological role, catalyzes the transfer of an acyl group from acyl-phosphate (acyl-PO(4)) to glycerol-3-phosphate (G3P) to form lysophosphatidic acid (LPA). This enzyme utilizes acyl-phosphate as fatty acyl donor, but not acyl-CoA or acyl-ACP. The polypeptide is Glycerol-3-phosphate acyltransferase (Prochlorococcus marinus (strain NATL2A)).